The sequence spans 468 residues: Phenylalanine--tRNA ligase alpha subunit (468 aa).

Residues Thr311, 350-352 (QLD), and Phe390 contribute to the L-phenylalanine site. Glu392 provides a ligand contact to Mg(2+).

Belongs to the class-II aminoacyl-tRNA synthetase family. Phe-tRNA synthetase alpha subunit type 2 subfamily. Tetramer of two alpha and two beta subunits. Mg(2+) is required as a cofactor.

It localises to the cytoplasm. It carries out the reaction tRNA(Phe) + L-phenylalanine + ATP = L-phenylalanyl-tRNA(Phe) + AMP + diphosphate + H(+). The sequence is that of Phenylalanine--tRNA ligase alpha subunit from Saccharolobus solfataricus (strain ATCC 35092 / DSM 1617 / JCM 11322 / P2) (Sulfolobus solfataricus).